Consider the following 147-residue polypeptide: Hemoglobin subunit epsilon-Y2 (147 aa).

Positions 3–147 (NFTAEEKTLI…VATALSHKYH (145 aa)) constitute a Globin domain. S51 is subject to Phosphoserine. Positions 64 and 93 each coordinate heme b.

This sequence belongs to the globin family. As to expression, high expression in yolk sac blood islands, fetal liver, and embryonic erythrocytes. Very low levels in adult liver and spleen.

Functionally, hemoglobin epsilon chain is a beta-type chain found in early embryos. The sequence is that of Hemoglobin subunit epsilon-Y2 (Hbb-y) from Mus musculus (Mouse).